Consider the following 185-residue polypeptide: Large ribosomal subunit protein uL5 (185 aa).

Belongs to the universal ribosomal protein uL5 family. In terms of assembly, part of the 50S ribosomal subunit; part of the 5S rRNA/L5/L18/L25 subcomplex. Contacts the 5S rRNA and the P site tRNA. Forms a bridge to the 30S subunit in the 70S ribosome.

Its function is as follows. This is one of the proteins that bind and probably mediate the attachment of the 5S RNA into the large ribosomal subunit, where it forms part of the central protuberance. In the 70S ribosome it contacts protein S13 of the 30S subunit (bridge B1b), connecting the 2 subunits; this bridge is implicated in subunit movement. Contacts the P site tRNA; the 5S rRNA and some of its associated proteins might help stabilize positioning of ribosome-bound tRNAs. This Bacteroides fragilis (strain ATCC 25285 / DSM 2151 / CCUG 4856 / JCM 11019 / LMG 10263 / NCTC 9343 / Onslow / VPI 2553 / EN-2) protein is Large ribosomal subunit protein uL5.